Here is a 694-residue protein sequence, read N- to C-terminus: Polyphosphate kinase (694 aa).

Position 45 (Asn-45) interacts with ATP. The Mg(2+) site is built by Arg-367 and Arg-397. The active-site Phosphohistidine intermediate is the His-427. Tyr-460, Arg-553, and His-580 together coordinate ATP.

This sequence belongs to the polyphosphate kinase 1 (PPK1) family. It depends on Mg(2+) as a cofactor. An intermediate of this reaction is the autophosphorylated ppk in which a phosphate is covalently linked to a histidine residue through a N-P bond.

The catalysed reaction is [phosphate](n) + ATP = [phosphate](n+1) + ADP. Catalyzes the reversible transfer of the terminal phosphate of ATP to form a long-chain polyphosphate (polyP). The sequence is that of Polyphosphate kinase from Campylobacter jejuni subsp. doylei (strain ATCC BAA-1458 / RM4099 / 269.97).